We begin with the raw amino-acid sequence, 603 residues long: Zinc finger protein 415 (603 aa).

A C2H2-type 1; degenerate zinc finger spans residues 264-286 (YRYIECDKALNHGSHMTVRQVSH). C2H2-type zinc fingers lie at residues 292–314 (YKCDLCGKVFSQKSNLARHWRVH), 320–342 (YKCNECDRSFSRNSCLALHRRVH), 348–370 (YKCYECDKVFSRNSCLALHQKTH), 376–398 (YTCKECGKAFSVRSTLTNHQVIH), 404–426 (YKCNECGKVFSQTSSLATHQRIH), 432–454 (YKCNECGKVFSQTSSLARHWRIH), 460–482 (YKCNECGKVFSYNSHLASHRRVH), 488–510 (YKCNECGKAFSVHSNLTTHQVIH), 516–538 (YKCNQCGKGFSVHSSLTTHQVIH), 544–566 (YKCNECGKSFSVRPNLTRHQIIH), and 572–594 (YKCSDCGKSFSVRPNLFRHQIIH).

In terms of tissue distribution, expressed in all tissues examined. Isoforms are differentially expressed. Isoform 3 and isoform 5 were highly expressed, isoform 4 moderately expressed, isoform 2 lower expression, the lowest expression level was seem with isoform 1.

It localises to the nucleus. The protein localises to the cytoplasm. Functionally, involved in transcriptional regulation. Transcriptional activity differed among the various isoforms. All isoforms except isoform 3 seem to suppresses the transcriptional activities of AP-1 and p53/TP53. This is Zinc finger protein 415 (ZNF415) from Homo sapiens (Human).